Reading from the N-terminus, the 520-residue chain is Rho GTPase-activating protein gacV (520 aa).

A helical transmembrane segment spans residues 8 to 28; that stretch reads NIKTYYIIGIITLIFIVSAVI. The stretch at 28-192 forms a coiled coil; that stretch reads IKNQLSSSNQ…EEQEEEQFSM (165 aa). 4 disordered regions span residues 33-73, 121-189, 348-373, and 489-520; these read SSSN…KLDN, EEKQ…EEEQ, NNNNNNNNNNNNNNNNNNDNNNNNNE, and LQEQNDQEEDNQEEEKDNQEEDEDEEDKDQEE. Positions 52-62 are enriched in basic residues; that stretch reads SKGRGNKKGKK. Basic and acidic residues predominate over residues 63-73; the sequence is PEKIQEKKLDN. Over residues 140 to 189 the composition is skewed to acidic residues; it reads QEEEEEEEEQQEIEEDEEEEEGQEQEEEEEQQEIEEGEEEQQEEEQEEEQ. A Rho-GAP domain is found at 195 to 472; that stretch reads VSIERLMDFQ…ILLKQKKEIA (278 aa). Residues 348–372 show a composition bias toward low complexity; the sequence is NNNNNNNNNNNNNNNNNNDNNNNNN. Positions 480–520 form a coiled coil; the sequence is YFKDEYSKKLQEQNDQEEDNQEEEKDNQEEDEDEEDKDQEE. Positions 493–520 are enriched in acidic residues; that stretch reads NDQEEDNQEEEKDNQEEDEDEEDKDQEE.

The protein localises to the membrane. Its function is as follows. Rho GTPase-activating protein involved in the signal transduction pathway. This is Rho GTPase-activating protein gacV (gacV) from Dictyostelium discoideum (Social amoeba).